We begin with the raw amino-acid sequence, 545 residues long: CTP synthase (545 aa).

The amidoligase domain stretch occupies residues 2 to 266; it reads TTNYIFVTGG…DDYICKRFSL (265 aa). Serine 14 is a binding site for CTP. Residue serine 14 coordinates UTP. ATP is bound by residues 15-20 and aspartate 72; that span reads SLGKGI. Mg(2+) is bound by residues aspartate 72 and glutamate 140. Residues 147–149, 187–192, and lysine 223 each bind CTP; these read DIE and KTKPTQ. Residues 187-192 and lysine 223 contribute to the UTP site; that span reads KTKPTQ. Position 239–241 (239–241) interacts with ATP; sequence KDV. In terms of domain architecture, Glutamine amidotransferase type-1 spans 291–542; the sequence is TIGMVGKYIE…VKAANEHQKR (252 aa). L-glutamine is bound at residue glycine 352. The active-site Nucleophile; for glutamine hydrolysis is cysteine 379. L-glutamine contacts are provided by residues 380-383, glutamate 403, and arginine 470; that span reads LGMQ. Catalysis depends on residues histidine 515 and glutamate 517.

The protein belongs to the CTP synthase family. As to quaternary structure, homotetramer.

It carries out the reaction UTP + L-glutamine + ATP + H2O = CTP + L-glutamate + ADP + phosphate + 2 H(+). The catalysed reaction is L-glutamine + H2O = L-glutamate + NH4(+). The enzyme catalyses UTP + NH4(+) + ATP = CTP + ADP + phosphate + 2 H(+). The protein operates within pyrimidine metabolism; CTP biosynthesis via de novo pathway; CTP from UDP: step 2/2. With respect to regulation, allosterically activated by GTP, when glutamine is the substrate; GTP has no effect on the reaction when ammonia is the substrate. The allosteric effector GTP functions by stabilizing the protein conformation that binds the tetrahedral intermediate(s) formed during glutamine hydrolysis. Inhibited by the product CTP, via allosteric rather than competitive inhibition. Its function is as follows. Catalyzes the ATP-dependent amination of UTP to CTP with either L-glutamine or ammonia as the source of nitrogen. Regulates intracellular CTP levels through interactions with the four ribonucleotide triphosphates. The sequence is that of CTP synthase from Salmonella typhi.